Reading from the N-terminus, the 504-residue chain is Hexose transporter 1 (504 aa).

Residues 1–29 are Cytoplasmic-facing; it reads MTKSSKDICSENEGKKNGKSGFFSTSFKY. A helical membrane pass occupies residues 30–50; it reads VLSACIASFIFGYQVSVLNTI. Residues 51 to 78 are Extracellular-facing; it reads KNFIVVEFEWCKGEKDRLNCSNNTIQSS. Cys61 and Cys70 are joined by a disulfide. Residues 79–99 form a helical membrane-spanning segment; that stretch reads FLLASVFIGAVLGCGFSGYLV. The Cytoplasmic segment spans residues 100-104; the sequence is QFGRR. The chain crosses the membrane as a helical span at residues 105-125; the sequence is LSLLIIYNFFFLVSILTSITH. Residues 126 to 129 lie on the Extracellular side of the membrane; it reads HFHT. A helical membrane pass occupies residues 130–150; it reads ILFARLLSGFGIGLVTVSVPM. Over 151-165 the chain is Cytoplasmic; the sequence is YISEMTHKDKKGAYG. A helical membrane pass occupies residues 166 to 186; that stretch reads VMHQLFITFGIFVAVMLGLAM. Alpha-D-glucose is bound at residue Gln169. Gln169 is a binding site for beta-D-glucose. Over 187-207 the chain is Extracellular; the sequence is GEGPKADSTEPLTSFAKLWWR. A helical membrane pass occupies residues 208 to 228; sequence LMFLFPSVISLIGILALVVFF. The Cytoplasmic portion of the chain corresponds to 229-293; that stretch reads KEETPYFLFE…SALKIPSYRY (65 aa). The helical transmembrane segment at 294 to 314 threads the bilayer; the sequence is VIILGCLLSGLQQFTGINVLV. Residues Gln305, Gln306, and Asn311 each coordinate alpha-D-glucose. Residue Gln305 coordinates beta-D-glucose. Position 311 (Asn311) interacts with beta-D-glucose. Over 315-331 the chain is Extracellular; the sequence is SNSNELYKEFLDSHLIT. Residues 332–352 traverse the membrane as a helical segment; that stretch reads ILSVVMTAVNFLMTFPAIYIV. Asn341 lines the beta-D-glucose pocket. Topologically, residues 353–358 are cytoplasmic; that stretch reads EKLGRK. A helical transmembrane segment spans residues 359–379; sequence TLLLWGCVGVLVAYLPTAIAN. Residues 380–392 lie on the Extracellular side of the membrane; the sequence is EINRNSNFVKILS. Residues 393–413 traverse the membrane as a helical segment; sequence IVATFVMIISFAVSYGPVLWI. Residue Trp412 coordinates alpha-D-glucose. Topologically, residues 414-429 are cytoplasmic; that stretch reads YLHEMFPSEIKDSAAS. A helical membrane pass occupies residues 430 to 450; it reads LASLVNWVCAIIVVFPSDIII. Residues 451 to 455 are Extracellular-facing; sequence KKSPS. The helical transmembrane segment at 456-476 threads the bilayer; sequence ILFIVFSVMSILTFFFIFFFI. Over 477-504 the chain is Cytoplasmic; it reads KETKGGEIGTSPYITMEERQKHMTKSVV.

This sequence belongs to the major facilitator superfamily. Sugar transporter (TC 2.A.1.1) family. In terms of assembly, homodimer.

The protein resides in the cell membrane. It carries out the reaction D-glucose(out) = D-glucose(in). The catalysed reaction is D-fructose(out) = D-fructose(in). The enzyme catalyses D-galactose(in) = D-galactose(out). It catalyses the reaction D-mannose(out) = D-mannose(in). It carries out the reaction D-glucosamine(out) = D-glucosamine(in). The catalysed reaction is D-xylose(out) = D-xylose(in). With respect to regulation, inhibited by cytochalasin B. Inhibited by compound 3361 (3-O-((undec-10-en)-1-yl)-D-glucose). Inhibited by compound HTI-1. Its function is as follows. Sodium-independent facilitative hexose transporter. Can transport D-glucose and D-fructose. Can transport D-mannose, D-galactose, D-xylose and D-glucosamine. The sequence is that of Hexose transporter 1 from Plasmodium falciparum (isolate 3D7).